The sequence spans 926 residues: Rap guanine nucleotide exchange factor 3 (926 aa).

At Ser79 the chain carries Phosphoserine. A DEP domain is found at 110–186 (ATYPTLIRDR…RDAQFYRFPG (77 aa)). The interaction with PDE3B stretch occupies residues 218 to 242 (TVALRKSPGQRTDEELDLIFEELVH). Residues 311–314 (GQLA) and 321–322 (RA) contribute to the 3',5'-cyclic AMP site. The disordered stretch occupies residues 369–388 (TSQGAGPSRPPTPGRNRYTV). In terms of domain architecture, N-terminal Ras-GEF spans 384-521 (NRYTVMSGTP…EQYPERRRHH (138 aa)). Positions 398-422 (ELLLEAMRPDSSAHDPTETFLSDFL) are interaction with PDE3B. Ser531 and Ser867 each carry phosphoserine. In terms of domain architecture, Ras-GEF spans 665-892 (SAKDLAGQLT…SRISTCSEQS (228 aa)).

In terms of assembly, interacts with PDE3B and PIK3R6; form a signaling complex that regulates phosphatidylinositol 3-kinase gamma in angiogenesis. In terms of tissue distribution, expressed at low levels in adult brain. Strongly expressed in parts of the neonatal brain, including the septum and the thalamus.

It is found in the cytoplasm. The protein resides in the membrane. In terms of biological role, guanine nucleotide exchange factor (GEF) for RAP1A and RAP2A small GTPases that is activated by binding cAMP. Through simultaneous binding of PDE3B to RAPGEF3 and PIK3R6 is assembled in a signaling complex in which it activates the PI3K gamma complex and which is involved in angiogenesis. Plays a role in the modulation of the cAMP-induced dynamic control of endothelial barrier function through a pathway that is independent on Rho-mediated signaling. Required for the actin rearrangement at cell-cell junctions, such as stress fibers and junctional actin. The protein is Rap guanine nucleotide exchange factor 3 (Rapgef3) of Rattus norvegicus (Rat).